We begin with the raw amino-acid sequence, 160 residues long: Phosphopantetheine adenylyltransferase (160 aa).

Substrate is bound at residue Ser-10. ATP-binding positions include 10-11 (SF) and His-18. Positions 42, 74, and 88 each coordinate substrate. Residues 89–91 (GLR), Glu-99, and 124–130 (YSFVSST) contribute to the ATP site.

It belongs to the bacterial CoaD family. In terms of assembly, homohexamer. Mg(2+) is required as a cofactor.

It localises to the cytoplasm. The catalysed reaction is (R)-4'-phosphopantetheine + ATP + H(+) = 3'-dephospho-CoA + diphosphate. The protein operates within cofactor biosynthesis; coenzyme A biosynthesis; CoA from (R)-pantothenate: step 4/5. Reversibly transfers an adenylyl group from ATP to 4'-phosphopantetheine, yielding dephospho-CoA (dPCoA) and pyrophosphate. The sequence is that of Phosphopantetheine adenylyltransferase from Leptospira biflexa serovar Patoc (strain Patoc 1 / Ames).